The chain runs to 926 residues: BTB/POZ domain-containing protein KCTD19 (926 aa).

Positions 18-72 (NVGGWHFSVPRSKLSQFPDSLLWKEASALTSSESQRLFIDRDGSTFRHVHYYLYT) constitute a BTB 1 domain. Serine 270 bears the Phosphoserine mark. A BTB 2 domain is found at 398–485 (IKVYVGSHWY…YHIPSLSEAL (88 aa)). The tract at residues 673–751 (GSEAASQPST…PAPEQPLPEA (79 aa)) is disordered. The segment covering 730-742 (DWSKQRTKERESP) has biased composition (basic and acidic residues).

Identified in a complex with ZNF541, HDAC1 and HSPA2. Identified in a complex with ZNF541 and HDAC1. Identified in a complex with HDAC1, HDAC2, DNTTIP1 and ZNF541.

The protein resides in the nucleus. Functionally, transcription regulator which is essential for male fertility and for the completion of meiotic prophase in spermatocytes. Regulates progression of the pachytene stage of meiotic prophase and promotes the transcriptional activation activity ZNF541. Required for the organization of chromosomes during metaphase I. The chain is BTB/POZ domain-containing protein KCTD19 (KCTD19) from Homo sapiens (Human).